The sequence spans 394 residues: Dual-specificity RNA methyltransferase RlmN (394 aa).

Glutamate 115 functions as the Proton acceptor in the catalytic mechanism. In terms of domain architecture, Radical SAM core spans 121–360; sequence EADRATLCVS…VIVRKTRGDD (240 aa). Cysteine 128 and cysteine 365 form a disulfide bridge. [4Fe-4S] cluster is bound by residues cysteine 135, cysteine 139, and cysteine 142. S-adenosyl-L-methionine contacts are provided by residues 189–190, serine 221, 243–245, and asparagine 322; these read GE and SLH. Cysteine 365 serves as the catalytic S-methylcysteine intermediate.

The protein belongs to the radical SAM superfamily. RlmN family. Requires [4Fe-4S] cluster as cofactor.

The protein localises to the cytoplasm. It carries out the reaction adenosine(2503) in 23S rRNA + 2 reduced [2Fe-2S]-[ferredoxin] + 2 S-adenosyl-L-methionine = 2-methyladenosine(2503) in 23S rRNA + 5'-deoxyadenosine + L-methionine + 2 oxidized [2Fe-2S]-[ferredoxin] + S-adenosyl-L-homocysteine. The catalysed reaction is adenosine(37) in tRNA + 2 reduced [2Fe-2S]-[ferredoxin] + 2 S-adenosyl-L-methionine = 2-methyladenosine(37) in tRNA + 5'-deoxyadenosine + L-methionine + 2 oxidized [2Fe-2S]-[ferredoxin] + S-adenosyl-L-homocysteine. In terms of biological role, specifically methylates position 2 of adenine 2503 in 23S rRNA and position 2 of adenine 37 in tRNAs. m2A2503 modification seems to play a crucial role in the proofreading step occurring at the peptidyl transferase center and thus would serve to optimize ribosomal fidelity. The sequence is that of Dual-specificity RNA methyltransferase RlmN from Pasteurella multocida (strain Pm70).